The primary structure comprises 313 residues: Beta-ribofuranosylphenol 5'-phosphate synthase (313 aa).

It belongs to the beta-RFA-P synthase family. As to quaternary structure, homodimer.

It catalyses the reaction 5-phospho-alpha-D-ribose 1-diphosphate + 4-hydroxybenzoate + H(+) = 4-(beta-D-ribofuranosyl)phenol 5'-phosphate + CO2 + diphosphate. The enzyme catalyses 4-aminobenzoate + 5-phospho-alpha-D-ribose 1-diphosphate + H(+) = 4-(beta-D-ribofuranosyl)aminobenzene 5'-phosphate + CO2 + diphosphate. The protein operates within cofactor biosynthesis; 5,6,7,8-tetrahydromethanopterin biosynthesis. Functionally, catalyzes the condensation of 4-hydroxybenzoate (HB) with 5-phospho-alpha-D-ribose 1-diphosphate (PRPP) to produce beta-ribofuranosylphenol 5'-phosphate (beta-RFH-P). Also catalyzes the condensation of 4-aminobenzoate (pABA) with PRPP to produce beta-ribofuranosylaminobenzene 5'-phosphate (beta-RFA-P). This chain is Beta-ribofuranosylphenol 5'-phosphate synthase, found in Archaeoglobus fulgidus (strain ATCC 49558 / DSM 4304 / JCM 9628 / NBRC 100126 / VC-16).